Reading from the N-terminus, the 61-residue chain is Metallothionein-1E (61 aa).

Residue M1 is modified to N-acetylmethionine. Positions M1–C29 are beta. Positions 5, 7, 13, 15, 19, 21, 24, 26, 29, 33, 34, 36, 37, 41, 44, 48, 50, 57, 59, and 60 each coordinate a divalent metal cation. The segment at K30–A61 is alpha.

It belongs to the metallothionein superfamily. Type 1 family. As to quaternary structure, monomer.

In terms of biological role, metallothioneins have a high content of cysteine residues that bind various heavy metals; these proteins are transcriptionally regulated by both heavy metals and glucocorticoids. The polypeptide is Metallothionein-1E (MT1E) (Homo sapiens (Human)).